Reading from the N-terminus, the 214-residue chain is MKLLFDLFPVILFFIAFKLYGIYVATAVAIIASIAQVAYVYAKNKRIEKMHIITLALIVILGGATLILQDETFIKWKPTVVNWGFALVFLGSHFIGQKPIIRRMMDQAISLPDTAWIKLSYMWIAFFIFSGIANIYVAYQYDTDTWVNFKLFGLMGLTLAFILIQGVYISRFIKSSDLDKNDETEEKVMDSTIETLAEVELDSVVDSKHDSKKS.

A run of 5 helical transmembrane segments spans residues 11 to 31, 50 to 70, 81 to 101, 119 to 139, and 149 to 169; these read ILFF…VAII, MHII…ILQD, VNWG…KPII, LSYM…YVAY, and FKLF…GVYI.

The protein belongs to the YciB family.

Its subcellular location is the cell inner membrane. Its function is as follows. Plays a role in cell envelope biogenesis, maintenance of cell envelope integrity and membrane homeostasis. This Hydrogenovibrio crunogenus (strain DSM 25203 / XCL-2) (Thiomicrospira crunogena) protein is Inner membrane-spanning protein YciB.